The following is a 281-amino-acid chain: Bifunctional protein FolD (281 aa).

NADP(+)-binding positions include 164–166 (GRS), S189, and T230.

This sequence belongs to the tetrahydrofolate dehydrogenase/cyclohydrolase family. In terms of assembly, homodimer.

It carries out the reaction (6R)-5,10-methylene-5,6,7,8-tetrahydrofolate + NADP(+) = (6R)-5,10-methenyltetrahydrofolate + NADPH. The enzyme catalyses (6R)-5,10-methenyltetrahydrofolate + H2O = (6R)-10-formyltetrahydrofolate + H(+). It functions in the pathway one-carbon metabolism; tetrahydrofolate interconversion. Functionally, catalyzes the oxidation of 5,10-methylenetetrahydrofolate to 5,10-methenyltetrahydrofolate and then the hydrolysis of 5,10-methenyltetrahydrofolate to 10-formyltetrahydrofolate. This chain is Bifunctional protein FolD, found in Dictyoglomus turgidum (strain DSM 6724 / Z-1310).